The chain runs to 612 residues: Mineralocorticoid receptor (612 aa).

Residues 1-228 (GNEIADSTVS…STGPSRPSKV (228 aa)) form a modulating region. Zn(2+) contacts are provided by Cys-229, Cys-232, Cys-246, Cys-249, Cys-269, Cys-275, Cys-285, and Cys-288. 2 NR C4-type zinc fingers span residues 229-249 (CLVC…CGSC) and 269-293 (CAGR…LQKC). The segment at residues 229-298 (CLVCGDEASG…RLQKCLQAGM (70 aa)) is a DNA-binding region (nuclear receptor). A hinge region spans residues 299–349 (NLGARKSKKLGKLKGVHEEHPQQPLQQTPTASPKEDTTLTSSSKEPSANSN). A disordered region spans residues 310–348 (KLKGVHEEHPQQPLQQTPTASPKEDTTLTSSSKEPSANS). Residues 339 to 348 (SSSKEPSANS) are compositionally biased toward low complexity. The NR LBD domain occupies 350–592 (SLVPLISAVS…EFPAMLVEII (243 aa)). Residues Asn-398 and Gln-404 each contribute to the 21-hydroxyprogesterone site. Residues Asn-398 and Gln-404 each contribute to the aldosterone site. 2 residues coordinate progesterone: Asn-398 and Gln-404. The interval 410–413 (KWAK) is important for coactivator binding. Positions 445 and 573 each coordinate 21-hydroxyprogesterone. The aldosterone site is built by Arg-445 and Thr-573. Positions 445 and 573 each coordinate progesterone.

This sequence belongs to the nuclear hormone receptor family. NR3 subfamily.

It is found in the cytoplasm. The protein resides in the nucleus. Its function is as follows. Receptor for both mineralocorticoids (MC) such as aldosterone and glucocorticoids (GC) such as corticosterone or cortisol. Binds to mineralocorticoid response elements (MRE) and transactivates target genes. The effect of MC is to increase ion and water transport and thus raise extracellular fluid volume and blood pressure and lower potassium levels. The chain is Mineralocorticoid receptor (nr3c2) from Xenopus laevis (African clawed frog).